Here is a 265-residue protein sequence, read N- to C-terminus: Inositol-1-monophosphatase (265 aa).

Positions 69, 87, 89, and 90 each coordinate Mg(2+). Substrate is bound at residue E69. Residues I89 to T92, R185, and D214 contribute to the substrate site. Residue D214 participates in Mg(2+) binding.

It belongs to the inositol monophosphatase superfamily. Mg(2+) serves as cofactor.

The enzyme catalyses a myo-inositol phosphate + H2O = myo-inositol + phosphate. It catalyses the reaction a ribonucleoside 5'-phosphate + H2O = a ribonucleoside + phosphate. Its function is as follows. Hydrolyzes myo-inositol monophosphate. Catalyzes the dephosphorylation of GMP and IMP. In Bacillus subtilis (strain 168), this protein is Inositol-1-monophosphatase.